Reading from the N-terminus, the 542-residue chain is T-complex protein 1 subunit delta (542 aa).

Over residues 1–16 (MPENVAPRTGPPAGAA) the composition is skewed to low complexity. The interval 1–31 (MPENVAPRTGPPAGAAGAAGGRGKSAYQDRD) is disordered. Arg-22 carries the post-translational modification Omega-N-methylarginine. N6-acetyllysine is present on Lys-24. The residue at position 39 (Ser-39) is a Phosphoserine. Gly-56 is an ADP binding site. Gly-56 serves as a coordination point for ATP. Asp-107 provides a ligand contact to Mg(2+). The ADP site is built by Gly-108, Thr-109, Thr-110, Ser-111, Asn-175, Ser-176, and Lys-177. ATP is bound by residues Gly-108 and Thr-109. Lys-177 provides a ligand contact to ATP. Phosphoserine occurs at positions 187 and 205. Residues Lys-291, Lys-305, Lys-322, and Lys-329 each carry the N6-acetyllysine modification. Gly-428 contacts ADP. Ser-447 is modified (phosphoserine). Residue Gln-513 participates in ADP binding.

Belongs to the TCP-1 chaperonin family. As to quaternary structure, component of the chaperonin-containing T-complex (TRiC), a hexadecamer composed of two identical back-to-back stacked rings enclosing a protein folding chamber. Each ring is made up of eight different subunits: TCP1/CCT1, CCT2, CCT3, CCT4, CCT5, CCT6A/CCT6, CCT7, CCT8. Interacts with PACRG. Interacts with DNAAF4. Interacts with DLEC1.

It is found in the cytoplasm. Its subcellular location is the melanosome. The protein resides in the cytoskeleton. The protein localises to the microtubule organizing center. It localises to the centrosome. It is found in the cilium basal body. It carries out the reaction ATP + H2O = ADP + phosphate + H(+). Its function is as follows. Component of the chaperonin-containing T-complex (TRiC), a molecular chaperone complex that assists the folding of actin, tubulin and other proteins upon ATP hydrolysis. The TRiC complex mediates the folding of WRAP53/TCAB1, thereby regulating telomere maintenance. As part of the TRiC complex may play a role in the assembly of BBSome, a complex involved in ciliogenesis regulating transports vesicles to the cilia. This is T-complex protein 1 subunit delta (CCT4) from Bos taurus (Bovine).